The chain runs to 572 residues: Arginine--tRNA ligase (572 aa).

The 'HIGH' region signature appears at 127-137; it reads ANPTGPLHVGH.

This sequence belongs to the class-I aminoacyl-tRNA synthetase family. As to quaternary structure, monomer.

It localises to the cytoplasm. The catalysed reaction is tRNA(Arg) + L-arginine + ATP = L-arginyl-tRNA(Arg) + AMP + diphosphate. In Vesicomyosocius okutanii subsp. Calyptogena okutanii (strain HA), this protein is Arginine--tRNA ligase.